A 451-amino-acid chain; its full sequence is UPF0210 protein CLL_A1718 (451 aa).

Belongs to the UPF0210 family. Homodimer.

The sequence is that of UPF0210 protein CLL_A1718 from Clostridium botulinum (strain Eklund 17B / Type B).